A 507-amino-acid chain; its full sequence is Histidine ammonia-lyase (507 aa).

Positions 141-143 form a cross-link, 5-imidazolinone (Ala-Gly); sequence ASG. Residue S142 is modified to 2,3-didehydroalanine (Ser).

The protein belongs to the PAL/histidase family. In terms of processing, contains an active site 4-methylidene-imidazol-5-one (MIO), which is formed autocatalytically by cyclization and dehydration of residues Ala-Ser-Gly.

Its subcellular location is the cytoplasm. It catalyses the reaction L-histidine = trans-urocanate + NH4(+). It functions in the pathway amino-acid degradation; L-histidine degradation into L-glutamate; N-formimidoyl-L-glutamate from L-histidine: step 1/3. This is Histidine ammonia-lyase from Burkholderia pseudomallei (strain 1106a).